Here is a 141-residue protein sequence, read N- to C-terminus: Nucleoside diphosphate kinase (141 aa).

ATP-binding residues include K9, F57, R85, T91, R102, and N112. H115 acts as the Pros-phosphohistidine intermediate in catalysis.

The protein belongs to the NDK family. In terms of assembly, homotetramer. It depends on Mg(2+) as a cofactor.

The protein resides in the cytoplasm. It catalyses the reaction a 2'-deoxyribonucleoside 5'-diphosphate + ATP = a 2'-deoxyribonucleoside 5'-triphosphate + ADP. The catalysed reaction is a ribonucleoside 5'-diphosphate + ATP = a ribonucleoside 5'-triphosphate + ADP. Functionally, major role in the synthesis of nucleoside triphosphates other than ATP. The ATP gamma phosphate is transferred to the NDP beta phosphate via a ping-pong mechanism, using a phosphorylated active-site intermediate. The polypeptide is Nucleoside diphosphate kinase (Chlamydia trachomatis serovar A (strain ATCC VR-571B / DSM 19440 / HAR-13)).